The following is a 320-amino-acid chain: Taste receptor type 2 member 129 (320 aa).

Residues 1–8 (MDGIVQNM) lie on the Extracellular side of the membrane. A helical membrane pass occupies residues 9–29 (FTFIVIVEIIIGWIGNGFIAL). Topologically, residues 30–55 (VNCIHWYKRRKISALNQILTALAFSR) are cytoplasmic. The helical transmembrane segment at 56–76 (IYLLLTVFTVIAVSTLYTHVL) threads the bilayer. The Extracellular segment spans residues 77 to 88 (VTRRVVKLINFH). A helical membrane pass occupies residues 89–109 (LLFSNHFSMWLAACLGLYYFL). The Cytoplasmic portion of the chain corresponds to 110–128 (KIAHFPNSIFVYLKMRINQ). The helical transmembrane segment at 129 to 149 (VVSGTLLMSLGLLFLNTLLIN) threads the bilayer. The Extracellular segment spans residues 150-185 (SYIDTKIDDYREHLLYDFTSNNTASFYRVILVINNC). Residue Asn-170 is glycosylated (N-linked (GlcNAc...) asparagine). A helical membrane pass occupies residues 186–206 (IFTSIPFTLSQSTFLLLIFSL). The Cytoplasmic portion of the chain corresponds to 207–233 (WRHYKKMQQHAQRCRDVLADAHIRVLQ). A helical membrane pass occupies residues 234–254 (TMVTYVLLCAIFFLSLSMQIL). Over 255 to 264 (RSELLKNILY) the chain is Extracellular. Residues 265 to 285 (VRFCEIVAAVFPSGHSCVLIC) form a helical membrane-spanning segment. Topologically, residues 286 to 320 (RDTNLRGTFLSVLSWLKQRFTSWIPNINCRSSCIF) are cytoplasmic.

The protein belongs to the G-protein coupled receptor T2R family.

It localises to the membrane. Functionally, putative taste receptor which may play a role in the perception of bitterness. In Mus musculus (Mouse), this protein is Taste receptor type 2 member 129.